The sequence spans 255 residues: Membrane protein insertase YidC 2 (255 aa).

An N-terminal signal peptide occupies residues 1-20 (MKKKLGLLAMVVALMAITAG). Residue Cys-21 is the site of N-palmitoyl cysteine attachment. Cys-21 is lipidated: S-diacylglycerol cysteine. 5 helical membrane passes run 59–79 (YGLA…PLMI), 129–149 (LAGC…YHAI), 160–180 (FLWF…VAAI), 202–222 (MMLW…PAAL), and 223–243 (SLYW…IKGP).

It belongs to the OXA1/ALB3/YidC family. Type 2 subfamily.

The protein localises to the cell membrane. In terms of biological role, required for the insertion and/or proper folding and/or complex formation of integral membrane proteins into the membrane. Involved in integration of membrane proteins that insert both dependently and independently of the Sec translocase complex, as well as at least some lipoproteins. The chain is Membrane protein insertase YidC 2 from Bacillus anthracis.